The chain runs to 455 residues: Argininosuccinate lyase (455 aa).

Belongs to the lyase 1 family. Argininosuccinate lyase subfamily.

The protein localises to the cytoplasm. It carries out the reaction 2-(N(omega)-L-arginino)succinate = fumarate + L-arginine. The protein operates within amino-acid biosynthesis; L-arginine biosynthesis; L-arginine from L-ornithine and carbamoyl phosphate: step 3/3. In Shewanella baltica (strain OS195), this protein is Argininosuccinate lyase.